The sequence spans 232 residues: Large ribosomal subunit protein uL1 (232 aa).

This sequence belongs to the universal ribosomal protein uL1 family. As to quaternary structure, part of the 50S ribosomal subunit.

In terms of biological role, binds directly to 23S rRNA. The L1 stalk is quite mobile in the ribosome, and is involved in E site tRNA release. Its function is as follows. Protein L1 is also a translational repressor protein, it controls the translation of the L11 operon by binding to its mRNA. The sequence is that of Large ribosomal subunit protein uL1 from Xanthomonas oryzae pv. oryzae (strain KACC10331 / KXO85).